Reading from the N-terminus, the 66-residue chain is Large ribosomal subunit protein uL29 (66 aa).

This sequence belongs to the universal ribosomal protein uL29 family.

This chain is Large ribosomal subunit protein uL29, found in Lysinibacillus sphaericus (strain C3-41).